Here is a 217-residue protein sequence, read N- to C-terminus: Dephospho-CoA kinase (217 aa).

The region spanning 2-217 (VIGLTGGIAS…RELARIEEQK (216 aa)) is the DPCK domain. Residue 10–15 (ASGKST) coordinates ATP.

Belongs to the CoaE family.

It is found in the cytoplasm. It catalyses the reaction 3'-dephospho-CoA + ATP = ADP + CoA + H(+). It participates in cofactor biosynthesis; coenzyme A biosynthesis; CoA from (R)-pantothenate: step 5/5. Its function is as follows. Catalyzes the phosphorylation of the 3'-hydroxyl group of dephosphocoenzyme A to form coenzyme A. This is Dephospho-CoA kinase from Lactococcus lactis subsp. lactis (strain IL1403) (Streptococcus lactis).